Here is a 70-residue protein sequence, read N- to C-terminus: DNA-directed RNA polymerase subunit omega (70 aa).

Belongs to the RNA polymerase subunit omega family. The RNAP catalytic core consists of 2 alpha, 1 beta, 1 beta' and 1 omega subunit. When a sigma factor is associated with the core the holoenzyme is formed, which can initiate transcription.

It catalyses the reaction RNA(n) + a ribonucleoside 5'-triphosphate = RNA(n+1) + diphosphate. Its function is as follows. Promotes RNA polymerase assembly. Latches the N- and C-terminal regions of the beta' subunit thereby facilitating its interaction with the beta and alpha subunits. The sequence is that of DNA-directed RNA polymerase subunit omega from Marinobacter nauticus (strain ATCC 700491 / DSM 11845 / VT8) (Marinobacter aquaeolei).